The chain runs to 24 residues: uncharacterized protein (24 aa).

Residues 1-3 (MKK) are Cytoplasmic-facing. A helical transmembrane segment spans residues 4–24 (TTIIMMGVAIIVVLGTELGWW).

It is found in the cell inner membrane. This is an uncharacterized protein from Escherichia coli (strain K12).